The chain runs to 278 residues: S-adenosylmethionine decarboxylase proenzyme (278 aa).

The disordered stretch occupies residues 96–115 (LTPESLTGESPGPLPGNKPS). S126 acts as the Schiff-base intermediate with substrate; via pyruvic acid in catalysis. A Pyruvic acid (Ser); by autocatalysis modification is found at S126. The active-site Proton acceptor; for processing activity is H131. C154 serves as the catalytic Proton donor; for catalytic activity.

Belongs to the prokaryotic AdoMetDC family. Type 2 subfamily. As to quaternary structure, heterooctamer of four alpha and four beta chains arranged as a tetramer of alpha/beta heterodimers. Pyruvate is required as a cofactor. Is synthesized initially as an inactive proenzyme. Formation of the active enzyme involves a self-maturation process in which the active site pyruvoyl group is generated from an internal serine residue via an autocatalytic post-translational modification. Two non-identical subunits are generated from the proenzyme in this reaction, and the pyruvate is formed at the N-terminus of the alpha chain, which is derived from the carboxyl end of the proenzyme. The post-translation cleavage follows an unusual pathway, termed non-hydrolytic serinolysis, in which the side chain hydroxyl group of the serine supplies its oxygen atom to form the C-terminus of the beta chain, while the remainder of the serine residue undergoes an oxidative deamination to produce ammonia and the pyruvoyl group blocking the N-terminus of the alpha chain.

The enzyme catalyses S-adenosyl-L-methionine + H(+) = S-adenosyl 3-(methylsulfanyl)propylamine + CO2. It functions in the pathway amine and polyamine biosynthesis; S-adenosylmethioninamine biosynthesis; S-adenosylmethioninamine from S-adenosyl-L-methionine: step 1/1. Its function is as follows. Catalyzes the decarboxylation of S-adenosylmethionine to S-adenosylmethioninamine (dcAdoMet), the propylamine donor required for the synthesis of the polyamines spermine and spermidine from the diamine putrescine. The polypeptide is S-adenosylmethionine decarboxylase proenzyme (Alkaliphilus metalliredigens (strain QYMF)).